Here is a 444-residue protein sequence, read N- to C-terminus: MPSIILPPKPTALQKPHINLAVVGHVDNGKSTLVGRLLYETGYVDEKALKEIEEMAKKIGKEDFAFAWILDRFKEERERGVTIEATHVGFETNKLFITIIDLPGHRDFVKNMIVGASQADAALFVISARPGEFEAAIGPQGQGREHLFLIRTLGVQQIVVAVNKMDVVNYDQKRYEQVKAEVSKLLKLLGYDPSKIHFIPVSAIKGDNIKTKSSNTPWYTGPTLLEVFDSFQPPQRPVDKPLRMPIQDVFTITGAGTVVVGRVETGVLKVGDRVVIVPPAKVGDVRSIETHHMKLEQAQPGDNIGVNVRGIAKEDVKRGDVLGKPDNVPTVAEEIVARIVVLWHPTAIGPGYAPVMHIHTATVPVQITELVSKLDPRTGQAVEQKPQFIKQGDVAIVKIKPLKPVVAEKFSDFPPLGRFALRDMGRTIAAGQILEVKPAQVQIK.

The tr-type G domain occupies 15–238 (KPHINLAVVG…DSFQPPQRPV (224 aa)). Positions 24–31 (GHVDNGKS) are G1. 24 to 31 (GHVDNGKS) contributes to the GTP binding site. S31 is a binding site for Mg(2+). Residues 80-84 (GVTIE) are G2. Residues 101 to 104 (DLPG) form a G3 region. GTP is bound by residues 101–105 (DLPGH) and 163–166 (NKMD). The segment at 163-166 (NKMD) is G4. The tract at residues 202–204 (SAI) is G5.

It belongs to the TRAFAC class translation factor GTPase superfamily. Classic translation factor GTPase family. EF-Tu/EF-1A subfamily.

It localises to the cytoplasm. It catalyses the reaction GTP + H2O = GDP + phosphate + H(+). GTP hydrolase that promotes the GTP-dependent binding of aminoacyl-tRNA to the A-site of ribosomes during protein biosynthesis. This Pyrobaculum aerophilum (strain ATCC 51768 / DSM 7523 / JCM 9630 / CIP 104966 / NBRC 100827 / IM2) protein is Elongation factor 1-alpha.